We begin with the raw amino-acid sequence, 221 residues long: Queuosine precursor transporter (221 aa).

Over 1–12 (MNVFSQTQRYKA) the chain is Cytoplasmic. Residues 13 to 33 (LFWLSLFHLLVITSSNYLVQL) traverse the membrane as a helical segment. Position 34 (proline 34) is a topological domain, periplasmic. A helical membrane pass occupies residues 35–55 (VSILGFHTTWGAFSFPFIFLA). Over 56-70 (TDLTVRIFGAPLARR) the chain is Cytoplasmic. A helical transmembrane segment spans residues 71 to 91 (IIFAVMIPALLISYVISSLFY). The Periplasmic portion of the chain corresponds to 92–97 (MGSWQG). Residues 98 to 118 (FGALAHFNLFVARIATASFMA) traverse the membrane as a helical segment. Over 119–143 (YALGQILDVHVFNRLRQSRRWWLAP) the chain is Cytoplasmic. A helical membrane pass occupies residues 144 to 164 (TASTLFGNVSDTLAFFFIAFW). At 165–184 (RSPDAFMAEHWMEIALVDYC) the chain is on the periplasmic side. The chain crosses the membrane as a helical span at residues 185 to 205 (FKVLISIVFFLPMYGVLLNML). Topologically, residues 206-221 (LKRLADKSEINALQAS) are cytoplasmic.

This sequence belongs to the vitamin uptake transporter (VUT/ECF) (TC 2.A.88) family. Q precursor transporter subfamily.

Its subcellular location is the cell inner membrane. Involved in the import of queuosine (Q) precursors, required for Q precursor salvage. Transports 7-cyano-7-deazaguanine (preQ(0)) and 7-aminomethyl-7-deazaguanine (preQ(1)), with a preference for preQ(0). This chain is Queuosine precursor transporter (yhhQ), found in Escherichia coli (strain K12).